The sequence spans 176 residues: ATP synthase subunit delta (176 aa).

Belongs to the ATPase delta chain family. F-type ATPases have 2 components, F(1) - the catalytic core - and F(0) - the membrane proton channel. F(1) has five subunits: alpha(3), beta(3), gamma(1), delta(1), epsilon(1). F(0) has three main subunits: a(1), b(2) and c(10-14). The alpha and beta chains form an alternating ring which encloses part of the gamma chain. F(1) is attached to F(0) by a central stalk formed by the gamma and epsilon chains, while a peripheral stalk is formed by the delta and b chains.

The protein localises to the cell inner membrane. Its function is as follows. F(1)F(0) ATP synthase produces ATP from ADP in the presence of a proton or sodium gradient. F-type ATPases consist of two structural domains, F(1) containing the extramembraneous catalytic core and F(0) containing the membrane proton channel, linked together by a central stalk and a peripheral stalk. During catalysis, ATP synthesis in the catalytic domain of F(1) is coupled via a rotary mechanism of the central stalk subunits to proton translocation. This protein is part of the stalk that links CF(0) to CF(1). It either transmits conformational changes from CF(0) to CF(1) or is implicated in proton conduction. The sequence is that of ATP synthase subunit delta from Campylobacter fetus subsp. fetus (strain 82-40).